We begin with the raw amino-acid sequence, 249 residues long: Ribosomal RNA small subunit methyltransferase J (249 aa).

Residues 97 to 98 (RD), 113 to 114 (ER), and Asp167 each bind S-adenosyl-L-methionine.

The protein belongs to the methyltransferase superfamily. RsmJ family.

It localises to the cytoplasm. It catalyses the reaction guanosine(1516) in 16S rRNA + S-adenosyl-L-methionine = N(2)-methylguanosine(1516) in 16S rRNA + S-adenosyl-L-homocysteine + H(+). Its function is as follows. Specifically methylates the guanosine in position 1516 of 16S rRNA. The polypeptide is Ribosomal RNA small subunit methyltransferase J (Aeromonas salmonicida (strain A449)).